The chain runs to 189 residues: Small ribosomal subunit protein uS5 (189 aa).

In terms of domain architecture, S5 DRBM spans phenylalanine 22–valine 85.

The protein belongs to the universal ribosomal protein uS5 family. As to quaternary structure, part of the 30S ribosomal subunit. Contacts proteins S4 and S8.

Its function is as follows. With S4 and S12 plays an important role in translational accuracy. Functionally, located at the back of the 30S subunit body where it stabilizes the conformation of the head with respect to the body. The sequence is that of Small ribosomal subunit protein uS5 from Agrobacterium fabrum (strain C58 / ATCC 33970) (Agrobacterium tumefaciens (strain C58)).